Here is a 382-residue protein sequence, read N- to C-terminus: Galactokinase (382 aa).

34 to 37 (EHTD) contributes to the substrate binding site. ATP is bound at residue 124–130 (GAGLSSS). S130 and E162 together coordinate Mg(2+). The active-site Proton acceptor is D174. Y223 is a binding site for substrate.

This sequence belongs to the GHMP kinase family. GalK subfamily.

The protein localises to the cytoplasm. It carries out the reaction alpha-D-galactose + ATP = alpha-D-galactose 1-phosphate + ADP + H(+). It functions in the pathway carbohydrate metabolism; galactose metabolism. Its function is as follows. Catalyzes the transfer of the gamma-phosphate of ATP to D-galactose to form alpha-D-galactose-1-phosphate (Gal-1-P). This is Galactokinase from Salmonella agona (strain SL483).